The chain runs to 158 residues: Transcription elongation factor GreA (158 aa).

This sequence belongs to the GreA/GreB family.

Its function is as follows. Necessary for efficient RNA polymerase transcription elongation past template-encoded arresting sites. The arresting sites in DNA have the property of trapping a certain fraction of elongating RNA polymerases that pass through, resulting in locked ternary complexes. Cleavage of the nascent transcript by cleavage factors such as GreA or GreB allows the resumption of elongation from the new 3'terminus. GreA releases sequences of 2 to 3 nucleotides. In Methylobacterium nodulans (strain LMG 21967 / CNCM I-2342 / ORS 2060), this protein is Transcription elongation factor GreA.